A 298-amino-acid polypeptide reads, in one-letter code: MTEPGASPEDPWVKASFADAHAGEGRAGRARARRGSGRRGAPQLSPESPLLSGARGCREDSSHPACAKVEYAYSDNSLDPGLFVESTHKGSVVSRANSIGSTSASSVPNTDDEDSDYQQEAYKESYKDRRRRAHTQAEQKRRDAIKRGYDDLQTIVPTCQQQDFSIGSQKLSKAIVLQKTIDYIQFLHKEKKKQEEEVSTLRKDVTALKIMKVNYEQIVKAHQDNPHEGEDQVSDQVKFNVFQGIMDSLFQSFNASISVASFQELSACVFSWIEEHCEPQTLREIVIGVLHQLKNQLY.

Residues 1 to 63 form a disordered region; that stretch reads MTEPGASPED…ARGCREDSSH (63 aa). Ser7 is subject to Phosphoserine. Residues 28-37 show a composition bias toward basic residues; that stretch reads GRARARRGSG. Phosphoserine is present on residues Ser45, Ser48, Ser74, Ser77, and Ser98. The segment covering 98–109 has biased composition (polar residues); that stretch reads SIGSTSASSVPN. The segment at 98–119 is disordered; sequence SIGSTSASSVPNTDDEDSDYQQ. The bHLH domain maps to 129 to 187; it reads RRRRAHTQAEQKRRDAIKRGYDDLQTIVPTCQQQDFSIGSQKLSKAIVLQKTIDYIQFL. Residues 194-214 are leucine-zipper; it reads QEEEVSTLRKDVTALKIMKVN.

Efficient DNA binding requires dimerization with another bHLH protein. Binds DNA as a heterodimer with MAD1, MAD4, MNT, WBSCR14 and MLXIP. Can also bind DNA as a homodimer. In terms of tissue distribution, expressed in all tissues examined: stomach, duodenum, jejunum, ileum, colon, liver, pancreas, salivary gland, kidney, spleen, lung, heart, skeletal muscle, brain, ovary and testis.

It localises to the cytoplasm. The protein resides in the nucleus. Transcription regulator. Forms a sequence-specific DNA-binding protein complex with MAD1, MAD4, MNT, WBSCR14 and MLXIP which recognizes the core sequence 5'-CACGTG-3'. The TCFL4-MAD1, TCFL4-MAD4, TCFL4-WBSCR14 complexes are transcriptional repressors. Plays a role in transcriptional activation of glycolytic target genes. Involved in glucose-responsive gene regulation. The sequence is that of Max-like protein X (Mlx) from Mus musculus (Mouse).